Here is a 312-residue protein sequence, read N- to C-terminus: DDRGK domain-containing protein 1 (312 aa).

Residues 1–2 (ME) are Lumenal-facing. The chain crosses the membrane as a helical span at residues 3-23 (LIILVGIATALLVVIITLYLL). The Cytoplasmic segment spans residues 24-312 (QKKNAAPETK…ISAGGEEASS (289 aa)). A compositionally biased stretch (low complexity) spans 59-79 (NQRNRLRQNAPAAPAGQVAPA). Residues 59 to 162 (NQRNRLRQNA…RKHQEDLEAE (104 aa)) are disordered. The segment covering 110-162 (LDEKMGAKKRAKMEAKEQKRLQREQELHDREQRKVKEAKEEAERKHQEDLEAE) has biased composition (basic and acidic residues).

The protein belongs to the DDRGK1 family. As to quaternary structure, interacts with Atg9; the interaction is transient.

The protein resides in the endoplasmic reticulum membrane. In terms of biological role, substrate adapter for ufmylation, the covalent attachment of the ubiquitin-like modifier UFM1 to substrate proteins. Required for ufmylation of Atg9; protects the nervous system during aging, possibly by stabilizing Atg9 and supporting its function. This chain is DDRGK domain-containing protein 1, found in Drosophila yakuba (Fruit fly).